The primary structure comprises 73 residues: UPF0346 protein SAS1364 (73 aa).

The protein belongs to the UPF0346 family.

The chain is UPF0346 protein SAS1364 from Staphylococcus aureus (strain MSSA476).